Consider the following 563-residue polypeptide: Arginine--tRNA ligase (563 aa).

Positions P120 to H130 match the 'HIGH' region motif.

This sequence belongs to the class-I aminoacyl-tRNA synthetase family. In terms of assembly, monomer.

The protein localises to the cytoplasm. The catalysed reaction is tRNA(Arg) + L-arginine + ATP = L-arginyl-tRNA(Arg) + AMP + diphosphate. In Clostridium botulinum (strain Loch Maree / Type A3), this protein is Arginine--tRNA ligase.